The sequence spans 339 residues: D-erythrose-4-phosphate dehydrogenase (339 aa).

NAD(+) is bound at residue 11–12 (RI). Substrate is bound by residues 158–160 (SCT), R204, 217–218 (TK), and R240. C159 serves as the catalytic Nucleophile. N322 contacts NAD(+).

It belongs to the glyceraldehyde-3-phosphate dehydrogenase family. Epd subfamily. Homotetramer.

It localises to the cytoplasm. It carries out the reaction D-erythrose 4-phosphate + NAD(+) + H2O = 4-phospho-D-erythronate + NADH + 2 H(+). Its pathway is cofactor biosynthesis; pyridoxine 5'-phosphate biosynthesis; pyridoxine 5'-phosphate from D-erythrose 4-phosphate: step 1/5. Its function is as follows. Catalyzes the NAD-dependent conversion of D-erythrose 4-phosphate to 4-phosphoerythronate. The polypeptide is D-erythrose-4-phosphate dehydrogenase (Aliivibrio fischeri (strain MJ11) (Vibrio fischeri)).